The following is a 262-amino-acid chain: Indole-3-glycerol phosphate synthase (262 aa).

The protein belongs to the TrpC family.

It catalyses the reaction 1-(2-carboxyphenylamino)-1-deoxy-D-ribulose 5-phosphate + H(+) = (1S,2R)-1-C-(indol-3-yl)glycerol 3-phosphate + CO2 + H2O. The protein operates within amino-acid biosynthesis; L-tryptophan biosynthesis; L-tryptophan from chorismate: step 4/5. The sequence is that of Indole-3-glycerol phosphate synthase from Leptothrix cholodnii (strain ATCC 51168 / LMG 8142 / SP-6) (Leptothrix discophora (strain SP-6)).